Here is a 679-residue protein sequence, read N- to C-terminus: Transketolase (679 aa).

His30 contributes to the substrate binding site. Thiamine diphosphate is bound by residues His69 and 116-118 (GPL). Asp157 serves as a coordination point for Mg(2+). The thiamine diphosphate site is built by Gly158 and Asn187. Residues Asn187 and Ile189 each coordinate Mg(2+). Residues His262, Arg358, and Ser385 each contribute to the substrate site. His262 provides a ligand contact to thiamine diphosphate. Glu417 and Phe444 together coordinate thiamine diphosphate. Glu417 acts as the Proton donor in catalysis. Substrate is bound by residues His468, Asp476, and Arg527.

The protein belongs to the transketolase family. In terms of assembly, homodimer. It depends on Mg(2+) as a cofactor. Requires Ca(2+) as cofactor. Mn(2+) serves as cofactor. The cofactor is Co(2+). Thiamine diphosphate is required as a cofactor.

The enzyme catalyses D-sedoheptulose 7-phosphate + D-glyceraldehyde 3-phosphate = aldehydo-D-ribose 5-phosphate + D-xylulose 5-phosphate. Catalyzes the transfer of a two-carbon ketol group from a ketose donor to an aldose acceptor, via a covalent intermediate with the cofactor thiamine pyrophosphate. The polypeptide is Transketolase (TKL1) (Kluyveromyces lactis (strain ATCC 8585 / CBS 2359 / DSM 70799 / NBRC 1267 / NRRL Y-1140 / WM37) (Yeast)).